Here is a 416-residue protein sequence, read N- to C-terminus: Probable intermembrane transport protein HI_1671 (416 aa).

8 helical membrane-spanning segments follow: residues 62 to 82 (ILIL…LLGI), 107 to 127 (IFIC…MLWL), 138 to 158 (VLLF…LVAL), 172 to 192 (EINI…LLFI), 263 to 283 (LIAG…GIYL), 306 to 326 (FVAF…IFIM), 347 to 367 (LLHL…VLAL), and 377 to 397 (IINF…FCTM).

Belongs to the PqiA family.

The protein resides in the cell inner membrane. This chain is Probable intermembrane transport protein HI_1671, found in Haemophilus influenzae (strain ATCC 51907 / DSM 11121 / KW20 / Rd).